The following is a 306-amino-acid chain: MSEPKTSATSETQTGTMTVKTGLAQMLKGGIIMDVINADQARVAEEAGACAVMALEKVPADIRKDGGVARMADPRKIKEIMDTVTVPVMAKCRIGHFAEAQILQNLGVDFIDESEVLSPADDENHVDKQPFNVPFVCGARSLGEALRRISEGAAMIRTKGEAGTGNVVEAVRHARQINREIRVAQCLSSAELYGYAKQLGVPLDLLQKTAKLGRLPVVNFAAGGLATPADVSLLMQLGVDGVFVGSGIFKSGNPEKRAKAMVQAVTHYNDPKVLADVSEDLGDPMVGLNCEHLSEKWAQRESVHKS.

Aspartate 34 contributes to the D-ribose 5-phosphate binding site. Catalysis depends on lysine 91, which acts as the Schiff-base intermediate with D-ribose 5-phosphate. Residue glycine 163 coordinates D-ribose 5-phosphate. Arginine 175 contributes to the D-glyceraldehyde 3-phosphate binding site. D-ribose 5-phosphate is bound by residues glycine 224 and 245–246 (GS).

This sequence belongs to the PdxS/SNZ family.

It catalyses the reaction aldehydo-D-ribose 5-phosphate + D-glyceraldehyde 3-phosphate + L-glutamine = pyridoxal 5'-phosphate + L-glutamate + phosphate + 3 H2O + H(+). It functions in the pathway cofactor biosynthesis; pyridoxal 5'-phosphate biosynthesis. Functionally, catalyzes the formation of pyridoxal 5'-phosphate from ribose 5-phosphate (RBP), glyceraldehyde 3-phosphate (G3P) and ammonia. The ammonia is provided by PDX2. Can also use ribulose 5-phosphate and dihydroxyacetone phosphate as substrates, resulting from enzyme-catalyzed isomerization of RBP and G3P, respectively. Also plays an indirect role in resistance to singlet oxygen-generating photosensitizers. This chain is Pyridoxal 5'-phosphate synthase subunit SNZERR (SNZERR), found in Suberites domuncula (Sponge).